Reading from the N-terminus, the 859-residue chain is DNA (cytosine-5)-methyltransferase 3B (859 aa).

The tract at residues Met1–Tyr305 is interaction with DNMT1 and DNMT3A. The segment at Gly25–Asp226 is disordered. Positions Asp85–Asn94 are enriched in acidic residues. Ser96 is subject to Phosphoserine. Lys102 is covalently cross-linked (Glycyl lysine isopeptide (Lys-Gly) (interchain with G-Cter in SUMO2)). Positions Leu103–Ser114 are enriched in basic and acidic residues. Phosphothreonine is present on Thr112. Ser116 bears the Phosphoserine mark. Positions Ser167–Ser179 are enriched in low complexity. Residues Lys189–Leu198 are compositionally biased toward polar residues. Residues Ala214–Asp226 show a composition bias toward basic and acidic residues. Position 216 is a phosphoserine (Ser216). In terms of domain architecture, PWWP spans Ile232–Phe290. A disordered region spans residues Lys348–Val429. 2 stretches are compositionally biased toward basic and acidic residues: residues Arg370–Arg381 and Gly412–Ala426. Arg415 is subject to Citrulline. The region spanning Glu428–Asp560 is the ADD domain. The GATA-type; atypical zinc finger occupies Arg439–Glu469. Residues Cys440–Cys532 form an interaction with the PRC2/EED-EZH2 complex region. The PHD-type; atypical zinc-finger motif lies at Gln480 to Arg536. Residues Ile581–Glu859 form the SAM-dependent MTase C5-type domain. Residues Asp588 to Thr592 and Glu611 contribute to the S-adenosyl-L-methionine site. Residue Lys623 forms a Glycyl lysine isopeptide (Lys-Gly) (interchain with G-Cter in SUMO2) linkage. Residue Asp633–Arg635 participates in S-adenosyl-L-methionine binding. Cys657 is an active-site residue. Arg838–Trp840 is a binding site for S-adenosyl-L-methionine.

Belongs to the class I-like SAM-binding methyltransferase superfamily. C5-methyltransferase family. In terms of assembly, interacts with CBX4, DNMT1, DNMT3A, SETDB1, UBE2I9, UBL1 and ZHX1. Interacts with SUV39H1 and BAZ2A/TIP5. Interacts with the PRC2/EED-EZH2 complex. Interacts with UHRF1. Post-translationally, sumoylated. In terms of processing, citrullinated by PADI4.

It localises to the nucleus. It carries out the reaction a 2'-deoxycytidine in DNA + S-adenosyl-L-methionine = a 5-methyl-2'-deoxycytidine in DNA + S-adenosyl-L-homocysteine + H(+). With respect to regulation, activated by binding to the regulatory factor DNMT3L. Its function is as follows. Required for genome-wide de novo methylation and is essential for the establishment of DNA methylation patterns during development. DNA methylation is coordinated with methylation of histones. May preferentially methylates nucleosomal DNA within the nucleosome core region. May function as transcriptional co-repressor by associating with CBX4 and independently of DNA methylation. Seems to be involved in gene silencing. In association with DNMT1 and via the recruitment of CTCFL/BORIS, involved in activation of BAG1 gene expression by modulating dimethylation of promoter histone H3 at H3K4 and H3K9. Functions as a transcriptional corepressor by associating with ZHX1. Required for DUX4 silencing in somatic cells. This Mus musculus (Mouse) protein is DNA (cytosine-5)-methyltransferase 3B (Dnmt3b).